Consider the following 80-residue polypeptide: Large ribosomal subunit protein uL24 (80 aa).

This sequence belongs to the universal ribosomal protein uL24 family. As to quaternary structure, part of the 50S ribosomal subunit.

In terms of biological role, one of two assembly initiator proteins, it binds directly to the 5'-end of the 23S rRNA, where it nucleates assembly of the 50S subunit. One of the proteins that surrounds the polypeptide exit tunnel on the outside of the subunit. This chain is Large ribosomal subunit protein uL24, found in Chlorobaculum parvum (strain DSM 263 / NCIMB 8327) (Chlorobium vibrioforme subsp. thiosulfatophilum).